The primary structure comprises 429 residues: Adenylosuccinate synthetase (429 aa).

Residues 12-18 and 40-42 each bind GTP; these read GDEGKGK and GHT. Catalysis depends on Asp13, which acts as the Proton acceptor. Residues Asp13 and Gly40 each contribute to the Mg(2+) site. Residues 13–16, 38–41, Thr128, Arg142, Gln223, Thr238, and Arg302 contribute to the IMP site; these read DEGK and NAGH. The active-site Proton donor is the His41. 298 to 304 serves as a coordination point for substrate; that stretch reads VNTGRPR. GTP-binding positions include Arg304, 330–332, and 412–414; these read KLD and GVG.

It belongs to the adenylosuccinate synthetase family. Homodimer. Mg(2+) is required as a cofactor.

The protein localises to the cytoplasm. The enzyme catalyses IMP + L-aspartate + GTP = N(6)-(1,2-dicarboxyethyl)-AMP + GDP + phosphate + 2 H(+). It functions in the pathway purine metabolism; AMP biosynthesis via de novo pathway; AMP from IMP: step 1/2. Its function is as follows. Plays an important role in the de novo pathway of purine nucleotide biosynthesis. Catalyzes the first committed step in the biosynthesis of AMP from IMP. The polypeptide is Adenylosuccinate synthetase (Kocuria rhizophila (strain ATCC 9341 / DSM 348 / NBRC 103217 / DC2201)).